A 173-amino-acid polypeptide reads, in one-letter code: MSRKKKPIDIFLQPGEYFVADAGYQIRTMLGSCVSITLWHPATRQGAMSHFLLPTRGASKPKQTLDARYGDEALKLMLIELQRLGIPSAQCQGKIFGGGNMFPGNLRSGALNVGQRNGEAALTLLREHGIPVMSESLFGIGHRQIVFDVSNGDVWSHQVMPIGTDSGDKGDLL.

It belongs to the CheD family.

The enzyme catalyses L-glutaminyl-[protein] + H2O = L-glutamyl-[protein] + NH4(+). Its function is as follows. Probably deamidates glutamine residues to glutamate on methyl-accepting chemotaxis receptors (MCPs), playing an important role in chemotaxis. This is Probable chemoreceptor glutamine deamidase CheD 2 from Albidiferax ferrireducens (strain ATCC BAA-621 / DSM 15236 / T118) (Rhodoferax ferrireducens).